The chain runs to 307 residues: Acetaldehyde dehydrogenase 1 (307 aa).

Catalysis depends on cysteine 132, which acts as the Acyl-thioester intermediate. NAD(+)-binding positions include 163–171 and asparagine 274; that span reads SVGPGTRKN.

It belongs to the acetaldehyde dehydrogenase family.

The catalysed reaction is acetaldehyde + NAD(+) + CoA = acetyl-CoA + NADH + H(+). The sequence is that of Acetaldehyde dehydrogenase 1 (tesF) from Comamonas testosteroni (Pseudomonas testosteroni).